Consider the following 208-residue polypeptide: MARYRGPVEKIERRFGVSLNLKGERRLAGKSSLEKRPYAPGQHGQRRSKISEYGLQLREKQKAKFMYGISEKQFRSIFQEANRLEGNTGELLIKLLERRLDNVVYRMGFATTRRFARQMVSHGHVLVDGKRVNIPSYMVLPGQKVEIREKSKNNPQVQRSIELTKQTGIAPWVDVDQAKVFGIFTRLPEREEVVIPVEERLIVELYSK.

A disordered region spans residues 30-51 (KSSLEKRPYAPGQHGQRRSKIS). Residues 98–161 (RRLDNVVYRM…KNNPQVQRSI (64 aa)) enclose the S4 RNA-binding domain.

Belongs to the universal ribosomal protein uS4 family. In terms of assembly, part of the 30S ribosomal subunit. Contacts protein S5. The interaction surface between S4 and S5 is involved in control of translational fidelity.

In terms of biological role, one of the primary rRNA binding proteins, it binds directly to 16S rRNA where it nucleates assembly of the body of the 30S subunit. With S5 and S12 plays an important role in translational accuracy. This Wolinella succinogenes (strain ATCC 29543 / DSM 1740 / CCUG 13145 / JCM 31913 / LMG 7466 / NCTC 11488 / FDC 602W) (Vibrio succinogenes) protein is Small ribosomal subunit protein uS4.